The primary structure comprises 271 residues: 5-amino-6-(5-phospho-D-ribitylamino)uracil phosphatase YbjI (271 aa).

Asp9 functions as the Nucleophile in the catalytic mechanism. Residue Asp9 coordinates Mg(2+). Residue Met10 coordinates phosphate. Asp11 lines the Mg(2+) pocket. Residues 44–45 (SG) and Lys192 contribute to the phosphate site. Asp215 provides a ligand contact to Mg(2+). Asn218 provides a ligand contact to phosphate.

This sequence belongs to the HAD-like hydrolase superfamily. Cof family. It depends on Mg(2+) as a cofactor. Requires Mn(2+) as cofactor. The cofactor is Co(2+). Zn(2+) serves as cofactor.

It carries out the reaction 5-amino-6-(5-phospho-D-ribitylamino)uracil + H2O = 5-amino-6-(D-ribitylamino)uracil + phosphate. The protein operates within cofactor biosynthesis; riboflavin biosynthesis; 5-amino-6-(D-ribitylamino)uracil from GTP: step 4/4. In terms of biological role, catalyzes the dephosphorylation of 5-amino-6-(5-phospho-D-ribitylamino)uracil, and thus could be involved in the riboflavin biosynthesis pathway. Is also able to dephosphorylate flavin mononucleotide (FMN), erythrose 4-phosphate and other phosphoric acid esters. This is 5-amino-6-(5-phospho-D-ribitylamino)uracil phosphatase YbjI (ybjI) from Escherichia coli (strain K12).